Consider the following 369-residue polypeptide: UDP-glucose 4-epimerase 4 (369 aa).

Residue Thr-19–Leu-50 coordinates NAD(+). Ser-144 contributes to the substrate binding site. Residue Tyr-168 is the Proton acceptor of the active site.

The protein belongs to the NAD(P)-dependent epimerase/dehydratase family. NAD(+) is required as a cofactor.

It catalyses the reaction UDP-alpha-D-glucose = UDP-alpha-D-galactose. Its pathway is carbohydrate metabolism; galactose metabolism. Catalyzes the interconversion between UDP-glucose and UDP-galactose. In Oryza sativa subsp. japonica (Rice), this protein is UDP-glucose 4-epimerase 4 (UGE-4).